We begin with the raw amino-acid sequence, 598 residues long: IQ calmodulin-binding motif-containing protein 1 (598 aa).

The interaction with BBS1, BBS8 and BBS9 stretch occupies residues 1-157; the sequence is MKPAGTDPRI…SLFWLLGGHV (157 aa). The interaction with CEP290, BBS1, BBS2, BBS4, BBS5, BBS7, BBS8 and BBS9 stretch occupies residues 287 to 598; the sequence is QEVEEQKLHK…MLFIGGTKPP (312 aa). IQ domains are found at residues 294–317, 318–338, 387–416, and 417–437; these read LHKAACLIQAYWKGFQTRKRLKKL, PSAVIALQRSFRSKRTKMMLE, EEKSALTIQKHWRGYRERKNFRQQRPSLTE, and YKAAVTLQRAVLKFLAKCRKK. The stretch at 336 to 362 forms a coiled coil; the sequence is MLELNRQKEEEDLRLKLQLQRQRAMRL. The segment at 530–598 is interaction with BBS1, BBS2, BBS4, BBS7, BBS8 and BBS9; that stretch reads AEGKEPEQFL…MLFIGGTKPP (69 aa).

As to quaternary structure, interacts with calmodulin. Interacts with CEP290/NPHP6; IQCB1/NPHP5 and CEP290/NPHP6; are proposed to form a functional NPHP5-6 module localized to the centrosome. Interacts with ATXN10. Interacts with NPHP1, INVS, NPHP4 and RPGRIP1L; these interactions likely require additional interactors. Associates with the BBSome complex; interacts with BBS1, BBS2, BBS4, BBS5, BBS7, BBS8 and BBS9. As to expression, localized to the outer segment and connecting cilia of photoreceptor cells.

It is found in the cytoplasm. The protein resides in the cytoskeleton. The protein localises to the microtubule organizing center. It localises to the centrosome. Its function is as follows. Involved in ciliogenesis. The function in an early step in cilia formation depends on its association with CEP290/NPHP6. Involved in regulation of the BBSome complex integrity, specifically for presence of BBS2 and BBS5 in the complex, and in ciliary targeting of selected BBSome cargos. May play a role in controlling entry of the BBSome complex to cilia possibly implicating CEP290/NPHP6. The sequence is that of IQ calmodulin-binding motif-containing protein 1 (Iqcb1) from Mus musculus (Mouse).